A 121-amino-acid chain; its full sequence is Basic phospholipase A2 homolog (121 aa).

Intrachain disulfides connect cysteine 26-cysteine 115, cysteine 28-cysteine 44, cysteine 43-cysteine 95, cysteine 49-cysteine 121, cysteine 50-cysteine 88, cysteine 57-cysteine 81, and cysteine 75-cysteine 86.

The protein belongs to the phospholipase A2 family. Group II subfamily. K49 sub-subfamily. Homodimer. In terms of tissue distribution, expressed by the venom gland.

Its subcellular location is the secreted. Its function is as follows. Snake venom phospholipase A2 homolog that lacks enzymatic activity, but has myotoxic and cytolytic activities. This is Basic phospholipase A2 homolog from Metlapilcoatlus nummifer (Mexican jumping pitviper).